The primary structure comprises 276 residues: Expansin-A25 (276 aa).

The signal sequence occupies residues 1 to 27 (MKLLEQMVYVECFMIIMATLLVSMSYG). The Expansin-like EG45 domain maps to 73–183 (QGACGYGDLF…RRISCARTGG (111 aa)). An Expansin-like CBD domain is found at 193 to 272 (YFLMILPYNV…NWGFGQTFDG (80 aa)).

This sequence belongs to the expansin family. Expansin A subfamily.

Its subcellular location is the secreted. It is found in the cell wall. The protein resides in the membrane. In terms of biological role, causes loosening and extension of plant cell walls by disrupting non-covalent bonding between cellulose microfibrils and matrix glucans. No enzymatic activity has been found. This chain is Expansin-A25 (EXPA25), found in Arabidopsis thaliana (Mouse-ear cress).